The sequence spans 112 residues: Thioredoxin (112 aa).

Residues 2–112 (SEDSATVAVT…ALLRELSDAL (111 aa)) enclose the Thioredoxin domain. A disulfide bridge links cysteine 35 with cysteine 38.

The protein belongs to the thioredoxin family.

Functionally, participates in various redox reactions through the reversible oxidation of its active center dithiol to a disulfide and catalyzes dithiol-disulfide exchange reactions. This is Thioredoxin (trxA) from Mycolicibacterium smegmatis (Mycobacterium smegmatis).